The chain runs to 330 residues: Exostosin-like 2 (330 aa).

The Cytoplasmic portion of the chain corresponds to 1–22 (MRCCHICKLPGRVMGIRVLRLS). A helical; Signal-anchor for type II membrane protein transmembrane segment spans residues 23 to 43 (LVVILVLLLVAGALTALLPSV). Residues 44 to 330 (KEDKMLMLRR…FPYANYKRKI (287 aa)) lie on the Lumenal side of the membrane. Position 71 (glutamine 71) interacts with UDP-N-acetyl-alpha-D-galactosamine. Position 71 (glutamine 71) interacts with UDP-N-acetyl-alpha-D-glucosamine. A glycan (N-linked (GlcNAc...) asparagine) is linked at asparagine 74. 8 residues coordinate UDP-N-acetyl-alpha-D-galactosamine: arginine 75, asparagine 100, asparagine 129, arginine 134, aspartate 150, aspartate 151, aspartate 152, and aspartate 244. 10 residues coordinate UDP-N-acetyl-alpha-D-glucosamine: arginine 75, asparagine 100, asparagine 129, arginine 134, aspartate 150, aspartate 151, aspartate 152, aspartate 244, aspartate 245, and arginine 293. Aspartate 152 is a Mn(2+) binding site. Cysteines 243 and 296 form a disulfide. The active site involves aspartate 245. Arginine 293 is a UDP-N-acetyl-alpha-D-galactosamine binding site.

The protein belongs to the glycosyltransferase 47 family. The cofactor is Mn(2+). Post-translationally, the soluble form derives from the membrane form by proteolytic processing. As to expression, ubiquitous.

It localises to the endoplasmic reticulum membrane. The protein resides in the secreted. It carries out the reaction 3-O-(beta-D-GlcA-(1-&gt;3)-beta-D-Gal-(1-&gt;3)-beta-D-Gal-(1-&gt;4)-beta-D-Xyl)-L-seryl-[protein] + UDP-N-acetyl-alpha-D-glucosamine = 3-O-(alpha-D-GlcNAc-(1-&gt;4)-beta-D-GlcA-(1-&gt;3)-beta-D-Gal-(1-&gt;3)-beta-D-Gal-(1-&gt;4)-beta-D-Xyl)-L-seryl-[protein] + UDP + H(+). It participates in glycan metabolism; heparan sulfate biosynthesis. Functionally, glycosyltransferase required for the biosynthesis of heparan-sulfate and responsible for the alternating addition of beta-1-4-linked glucuronic acid (GlcA) and alpha-1-4-linked N-acetylglucosamine (GlcNAc) units to nascent heparan sulfate chains. The protein is Exostosin-like 2 (EXTL2) of Homo sapiens (Human).